A 630-amino-acid chain; its full sequence is Phosphatidylinositol 4-kinase gamma 5 (630 aa).

One can recognise a Ubiquitin-like; degenerate domain in the interval 41 to 98 (RRVFVQTETGCVLGLELDRSDNAHTVKRKLQVALNFPIEESSLTFGDLVLKNDLTAVR). In terms of domain architecture, PI3K/PI4K catalytic spans 162–459 (GIDPVAVNSG…LIGEKDAESP (298 aa)). A G-loop region spans residues 168-174 (VNSGLGG). Residues 169 to 175 (NSGLGGA), Lys-190, and 279 to 282 (QQFI) contribute to the ATP site. Residues 312–320 (LNTDRHSGN) are catalytic loop. Positions 339 to 365 (PIDHGLCLPETLEDPYFEWIHWPQASI) are activation loop. Asp-341 lines the ATP pocket. The interval 500 to 527 (LSKVEETTEDGEEEEEEDREEEENDRAD) is disordered. The segment covering 506–524 (TTEDGEEEEEEDREEEEND) has biased composition (acidic residues). Ser-571 is subject to Phosphoserine.

This sequence belongs to the PI3/PI4-kinase family. Type II PI4K subfamily. Interacts with AHK2.

It carries out the reaction a 1,2-diacyl-sn-glycero-3-phospho-(1D-myo-inositol) + ATP = a 1,2-diacyl-sn-glycero-3-phospho-(1D-myo-inositol 4-phosphate) + ADP + H(+). Its function is as follows. The phosphorylation of phosphatidylinositol (PI) to PI4P is the first committed step in the generation of phosphatidylinositol 4,5-bisphosphate (PIP2), a precursor of the second messenger inositol 1,4,5-trisphosphate (InsP3). The sequence is that of Phosphatidylinositol 4-kinase gamma 5 (PI4KG5) from Arabidopsis thaliana (Mouse-ear cress).